The primary structure comprises 294 residues: S-methyl-5'-thioadenosine phosphorylase (294 aa).

Residues Ser16, 58–59 (RH), and 91–92 (SA) each bind phosphate. Residue Met189 participates in substrate binding. Thr190 lines the phosphate pocket. 213-215 (DFD) provides a ligand contact to substrate.

It belongs to the PNP/MTAP phosphorylase family. MTAP subfamily. As to quaternary structure, homohexamer. Dimer of a homotrimer.

The catalysed reaction is S-methyl-5'-thioadenosine + phosphate = 5-(methylsulfanyl)-alpha-D-ribose 1-phosphate + adenine. It catalyses the reaction 5'-deoxyadenosine + phosphate = 5-deoxy-alpha-D-ribose 1-phosphate + adenine. It functions in the pathway amino-acid biosynthesis; L-methionine biosynthesis via salvage pathway; S-methyl-5-thio-alpha-D-ribose 1-phosphate from S-methyl-5'-thioadenosine (phosphorylase route): step 1/1. In terms of biological role, catalyzes the reversible phosphorylation of S-methyl-5'-thioadenosine (MTA) to adenine and 5-methylthioribose-1-phosphate. Involved in the breakdown of MTA, a major by-product of polyamine biosynthesis. Responsible for the first step in the methionine salvage pathway after MTA has been generated from S-adenosylmethionine. Has broad substrate specificity with 6-aminopurine nucleosides as preferred substrates. Also catalyzes the phosphorylation of 5'-deoxyadenosine (5'dAdo) to 5-deoxyribose 1-phosphate. Part of a bifunctional DHAP-shunt salvage pathway for SAM by-products. In Rhodospirillum rubrum (strain ATCC 11170 / ATH 1.1.1 / DSM 467 / LMG 4362 / NCIMB 8255 / S1), this protein is S-methyl-5'-thioadenosine phosphorylase.